The chain runs to 126 residues: Small ribosomal subunit protein uS13 (126 aa).

The disordered stretch occupies residues 95–126 (GLPVRGQRTHTNARTRKGPRKTVAGKKKPGKK).

Belongs to the universal ribosomal protein uS13 family. As to quaternary structure, part of the 30S ribosomal subunit. Forms a loose heterodimer with protein S19. Forms two bridges to the 50S subunit in the 70S ribosome.

In terms of biological role, located at the top of the head of the 30S subunit, it contacts several helices of the 16S rRNA. In the 70S ribosome it contacts the 23S rRNA (bridge B1a) and protein L5 of the 50S subunit (bridge B1b), connecting the 2 subunits; these bridges are implicated in subunit movement. Contacts the tRNAs in the A and P-sites. The sequence is that of Small ribosomal subunit protein uS13 from Acidothermus cellulolyticus (strain ATCC 43068 / DSM 8971 / 11B).